A 359-amino-acid chain; its full sequence is 4'-phosphopantetheinyl transferase A (359 aa).

Belongs to the P-Pant transferase superfamily.

It carries out the reaction apo-[ACP] + CoA = holo-[ACP] + adenosine 3',5'-bisphosphate + H(+). Activity is inhibited bythe antifunfal copmpounds PD 404,182, 6-nitroso-1,2-benzopyrone, and calmidazolium chloride with IC(50) values of 3.9 uM, 35.2 uM, and 19.2 uM, respectively. Acyl-carrier-protein synthase that transfers the 4'-phosphopantetheine moiety from coenzyme A to a Ser of an acyl-carrier-protein. The 4'-phosphopantetheine (4'-PPT) portion of CoA provides the essential prosthetic group for a number of carrier proteins and multi-domain enzymes, priming them for the acceptance of acyl building blocks in fatty acid synthesis and many aspects of secondary metabolism mediated by polyketide synthases (PKSs) and non-ribosomal peptide synthetases (NRPSs). PptA is able to transfer the cofactor to a broad range of enzymes with acyl- or peptidyl-carrier protein domains and activates target enzymes involved in the synthesis of lysine, but also secondary metabolites including gliotoxin, fumigaclavine C, fumiquinazole A, fumiquinazoline C, pyripyroprene A, fumagillin, the siderophores triacetylfusarinine C (TAFC) and ferricrocin (FC), and dihydroxy naphthalene (DHN)-melanin. Plays an essential role in virulence. In Aspergillus fumigatus (strain ATCC MYA-4609 / CBS 101355 / FGSC A1100 / Af293) (Neosartorya fumigata), this protein is 4'-phosphopantetheinyl transferase A.